A 157-amino-acid polypeptide reads, in one-letter code: Small ribosomal subunit protein uS7 (157 aa).

It belongs to the universal ribosomal protein uS7 family. Part of the 30S ribosomal subunit. Contacts proteins S9 and S11.

In terms of biological role, one of the primary rRNA binding proteins, it binds directly to 16S rRNA where it nucleates assembly of the head domain of the 30S subunit. Is located at the subunit interface close to the decoding center, probably blocks exit of the E-site tRNA. This chain is Small ribosomal subunit protein uS7, found in Rhodopirellula baltica (strain DSM 10527 / NCIMB 13988 / SH1).